A 255-amino-acid polypeptide reads, in one-letter code: 5'-nucleotidase SurE (255 aa).

A divalent metal cation is bound by residues Asp-8, Asp-9, Ser-39, and Asn-95.

The protein belongs to the SurE nucleotidase family. The cofactor is a divalent metal cation.

The protein localises to the cytoplasm. The catalysed reaction is a ribonucleoside 5'-phosphate + H2O = a ribonucleoside + phosphate. Nucleotidase that shows phosphatase activity on nucleoside 5'-monophosphates. This Thermosipho melanesiensis (strain DSM 12029 / CIP 104789 / BI429) protein is 5'-nucleotidase SurE.